Here is a 527-residue protein sequence, read N- to C-terminus: Berberine bridge enzyme-like 14 (527 aa).

Residues 1–23 (MKSSTTQTLIFTVFLLLIPTSFA) form the signal peptide. Residues Cys-35 and Cys-96 are joined by a disulfide bond. Residues Asn-47, Asn-72, Asn-161, Asn-296, Asn-328, Asn-396, and Asn-481 are each glycosylated (N-linked (GlcNAc...) asparagine). The FAD-binding PCMH-type domain occupies 74–249 (TTRKPVAIVA…LAWKIKLVPV (176 aa)). The segment at residues 111-174 (HDYDGMSYLS…NLRGFPAGIC (64 aa)) is a cross-link (6-(S-cysteinyl)-8alpha-(pros-histidyl)-FAD (His-Cys)).

This sequence belongs to the oxygen-dependent FAD-linked oxidoreductase family. FAD is required as a cofactor. The FAD cofactor is bound via a bicovalent 6-S-cysteinyl, 8alpha-N1-histidyl FAD linkage.

It is found in the secreted. The protein localises to the cell wall. This chain is Berberine bridge enzyme-like 14, found in Arabidopsis thaliana (Mouse-ear cress).